Reading from the N-terminus, the 39-residue chain is Phospholipase A2 (39 aa).

3 residues coordinate Ca(2+): Trp10, Gly12, and Gly14. A disulfide bridge links Cys11 with Cys33. His36 is a catalytic residue. Asp37 provides a ligand contact to Ca(2+).

The cofactor is Ca(2+). Expressed uniformly in tentacles (at protein level).

It localises to the secreted. The protein resides in the nematocyst. It carries out the reaction a 1,2-diacyl-sn-glycero-3-phosphocholine + H2O = a 1-acyl-sn-glycero-3-phosphocholine + a fatty acid + H(+). Inhibited by morin and p-BPB. Functionally, PA2 catalyzes the calcium-dependent hydrolysis of the 2-acyl groups in 3-sn-phosphoglycerides. Induces insulin secretion in isolated rat islets under high glucose concentration conditions, but not under low glucose concentration conditions. Increases perfusion pressure, renal vascular resistance, urinary flow, glomerular filtration rate, and potassium, sodium, and chloride excretion levels in rat kidney. Does not increase perfusion pressure in the rat mesenteric vascular bed. In Bunodosoma caissarum (Sea anemone), this protein is Phospholipase A2.